The sequence spans 55 residues: ATP synthase F(0) complex subunit 8 (55 aa).

A helical transmembrane segment spans residues 4-24; that stretch reads LNPAPWFAILVFSWLVFLTVI. Positions 36-55 are disordered; the sequence is EPTSQSTEKTKPEPWNWPWH.

The protein belongs to the ATPase protein 8 family. Component of the ATP synthase complex composed at least of ATP5F1A/subunit alpha, ATP5F1B/subunit beta, ATP5MC1/subunit c (homooctomer), MT-ATP6/subunit a, MT-ATP8/subunit 8, ATP5ME/subunit e, ATP5MF/subunit f, ATP5MG/subunit g, ATP5MK/subunit k, ATP5MJ/subunit j, ATP5F1C/subunit gamma, ATP5F1D/subunit delta, ATP5F1E/subunit epsilon, ATP5PF/subunit F6, ATP5PB/subunit b, ATP5PD/subunit d, ATP5PO/subunit OSCP. ATP synthase complex consists of a soluble F(1) head domain (subunits alpha(3) and beta(3)) - the catalytic core - and a membrane F(0) domain - the membrane proton channel (subunits c, a, 8, e, f, g, k and j). These two domains are linked by a central stalk (subunits gamma, delta, and epsilon) rotating inside the F1 region and a stationary peripheral stalk (subunits F6, b, d, and OSCP).

It is found in the mitochondrion membrane. In terms of biological role, subunit 8, of the mitochondrial membrane ATP synthase complex (F(1)F(0) ATP synthase or Complex V) that produces ATP from ADP in the presence of a proton gradient across the membrane which is generated by electron transport complexes of the respiratory chain. ATP synthase complex consist of a soluble F(1) head domain - the catalytic core - and a membrane F(1) domain - the membrane proton channel. These two domains are linked by a central stalk rotating inside the F(1) region and a stationary peripheral stalk. During catalysis, ATP synthesis in the catalytic domain of F(1) is coupled via a rotary mechanism of the central stalk subunits to proton translocation. In vivo, can only synthesize ATP although its ATP hydrolase activity can be activated artificially in vitro. Part of the complex F(0) domain. This Salvelinus alpinus (Arctic char) protein is ATP synthase F(0) complex subunit 8.